The following is a 275-amino-acid chain: tRNA (guanine-N(1)-)-methyltransferase (275 aa).

S-adenosyl-L-methionine is bound by residues G139 and 159–164 (IGDYIL).

It belongs to the RNA methyltransferase TrmD family. As to quaternary structure, homodimer.

The protein resides in the cytoplasm. It carries out the reaction guanosine(37) in tRNA + S-adenosyl-L-methionine = N(1)-methylguanosine(37) in tRNA + S-adenosyl-L-homocysteine + H(+). In terms of biological role, specifically methylates guanosine-37 in various tRNAs. The sequence is that of tRNA (guanine-N(1)-)-methyltransferase from Lachnoclostridium phytofermentans (strain ATCC 700394 / DSM 18823 / ISDg) (Clostridium phytofermentans).